Reading from the N-terminus, the 234-residue chain is STARD3 N-terminal-like protein (234 aa).

An N-acetylmethionine modification is found at Met1. At 1–53 (MNHLPEDMENALTGSQSSHASLRNIHSINPTQLMARIESYEGREKKGISDVRR) the chain is on the cytoplasmic side. 3 positions are modified to phosphoserine: Ser15, Ser21, and Ser27. Residues 48–218 (ISDVRRTFCL…YSPPESEAGS (171 aa)) form the MENTAL domain. Residues 54–74 (TFCLFVTFDLLFVTLLWIIEL) traverse the membrane as a helical segment. Over 75–97 (NVNGGIENTLEKEVMQYDYYSSY) the chain is Extracellular. The chain crosses the membrane as a helical span at residues 98-118 (FDIFLLAVFRFKVLILAYAVC). At 119–122 (RLRH) the chain is on the cytoplasmic side. The helical transmembrane segment at 123 to 143 (WWAIALTTAVTSAFLLAKVIL) threads the bilayer. The Extracellular segment spans residues 144-150 (SKLFSQG). The chain crosses the membrane as a helical span at residues 151–171 (AFGYVLPIISFILAWIETWFL). Topologically, residues 172–234 (DFKVLPQEAE…QDSEKPLLEL (63 aa)) are cytoplasmic. Ser193 is subject to Phosphoserine. The segment at 200–234 (PGGLSDGQFYSPPESEAGSEEAEEKQDSEKPLLEL) is disordered. Residues 208-213 (FYSPPE) carry the FFAT motif. Residues 224–234 (KQDSEKPLLEL) show a composition bias toward basic and acidic residues.

Belongs to the STARD3 family. In terms of assembly, homodimer. Interacts (via the MENTAL domain) with STARD3NL. Interacts (via FFAT motif) with VAPA. Interacts (via FFAT motif) with VAPB. Interacts (via FFAT motif) with MOSPD2 (via MSP domain).

It is found in the late endosome membrane. Functionally, tethering protein that creates contact site between the endoplasmic reticulum and late endosomes: localizes to late endosome membranes and contacts the endoplasmic reticulum via interaction with VAPA and VAPB. In Homo sapiens (Human), this protein is STARD3 N-terminal-like protein.